The sequence spans 234 residues: Peptidase E (234 aa).

Active-site charge relay system residues include S123, D138, and H160.

The protein belongs to the peptidase S51 family.

It is found in the cytoplasm. It catalyses the reaction Dipeptidase E catalyzes the hydrolysis of dipeptides Asp-|-Xaa. It does not act on peptides with N-terminal Glu, Asn or Gln, nor does it cleave isoaspartyl peptides.. In terms of biological role, hydrolyzes dipeptides containing N-terminal aspartate residues. May play a role in allowing the cell to use peptide aspartate to spare carbon otherwise required for the synthesis of the aspartate family of amino acids. This Haemophilus influenzae (strain PittGG) protein is Peptidase E.